Here is a 216-residue protein sequence, read N- to C-terminus: Cytidylate kinase (216 aa).

7-15 (GPSGTGKST) provides a ligand contact to ATP.

This sequence belongs to the cytidylate kinase family. Type 1 subfamily.

Its subcellular location is the cytoplasm. The enzyme catalyses CMP + ATP = CDP + ADP. The catalysed reaction is dCMP + ATP = dCDP + ADP. The polypeptide is Cytidylate kinase (Chlamydia trachomatis serovar L2 (strain ATCC VR-902B / DSM 19102 / 434/Bu)).